We begin with the raw amino-acid sequence, 1538 residues long: Lhr helicase/uracil glycosylase (1538 aa).

The interval 1-897 (MADNPDPSSL…ERRASVLSLD (897 aa)) is lhr-Core. ATP contacts are provided by Gln34, Lys57, Thr58, Asp179, Glu180, Ile398, Arg415, and His418. Residues 38 to 235 (WHVAARSEHA…FLGGDRPVTV (198 aa)) enclose the Helicase ATP-binding domain. A DEVH box motif is present at residues 179–182 (DEVH). Residues 284–462 (GILDEVLRHR…NLTPPHNPLD (179 aa)) form the Helicase C-terminal domain. Residues 463–552 (VLAQQTVAAA…VTSGGTIPDR (90 aa)) form a beta-sheet bundle region. Residues 553–623 (GMYSVLLPEG…SARLPFWRGE (71 aa)) form a WH domain region. Residues 624 to 897 (GNGRPAELGE…ERRASVLSLD (274 aa)) are domain 4. Positions 898–1538 (SELLRNLLGQ…SSSPQGLDWG (641 aa)) are lhr-CTD. Residues 1287–1312 (SNARTSTRRSHRARRGRPVYAQPVSP) form a disordered region. Positions 1292 to 1303 (STRRSHRARRGR) are enriched in basic residues.

Belongs to the Lhr helicase family. As to quaternary structure, homooligomerizes, probably a homotetramer. Ca(2+) serves as cofactor. Requires Uracil deglycosylase activity does not require a cofactor. as cofactor.

The enzyme catalyses Couples ATP hydrolysis with the unwinding of duplex DNA by translocating in the 3'-5' direction.. It catalyses the reaction ATP + H2O = ADP + phosphate + H(+). The catalysed reaction is Hydrolyzes single-stranded DNA or mismatched double-stranded DNA and polynucleotides, releasing free uracil.. Functionally, a 3'-5' helicase probably involved in DNA repair. Translocates in an ATP-dependent manner 3'-to-5' on single-stranded (ss)DNA, unwinding any encountered duplex nucleic acid. An RNA:DNA hybrid with a 3'-ssDNA loading strand is a 4.5-fold better helicase substrate than 3'-tailed double-stranded (ds)DNA; substrates where the helicase loads on a 3'-ssRNA tail (DNA:RNA and RNA:RNA) are not unwound. Unlike its M.smegmatis counterpart, the ATPase is not ssDNA-dependent. Forms a clamp around the ssDNA loading strand. Excises uracil residues from DNA; forked DNA with a dU residue is the best substrate followed by ssDNA. Inactive on dsDNA with a dU residue or DNA with an 8-oxoguanine residue. Uracil residues in DNA can arise as a result of misincorporation of dUMP residues by DNA polymerase or due to deamination of cytosine. This Escherichia coli (strain K12) protein is Lhr helicase/uracil glycosylase.